The primary structure comprises 447 residues: Serine/threonine-protein phosphatase 2A 55 kDa regulatory subunit B delta isoform (447 aa).

WD repeat units follow at residues A26–P65, E91–E132, A175–N213, E224–R264, E283–E321, E338–L379, and D414–N447.

This sequence belongs to the phosphatase 2A regulatory subunit B family. In terms of assembly, PP2A consists of a common heterodimeric core enzyme, composed of a 36 kDa catalytic subunit (subunit C) and a 65 kDa constant regulatory subunit (PR65 or subunit A), that associates with a variety of regulatory subunits.

The protein localises to the cytoplasm. Its function is as follows. Substrate-recognition subunit of protein phosphatase 2A (PP2A) that plays a key role in cell cycle by controlling mitosis entry and exit. The activity of PP2A complexes containing PPP2R2D (PR55-delta) fluctuate during the cell cycle: the activity is high in interphase and low in mitosis. This Danio rerio (Zebrafish) protein is Serine/threonine-protein phosphatase 2A 55 kDa regulatory subunit B delta isoform (ppp2r2d).